The following is a 996-amino-acid chain: Disabled homolog 2-interacting protein (996 aa).

Residues 1–118 (MENLRRAVHP…AGRQFVEKWY (118 aa)) enclose the C2 domain. The Ras-GAP domain maps to 194-402 (GKVKDFLTDL…TNMQRFLLEI (209 aa)). The tract at residues 453–750 (LRDVHTALST…RTPPTMLSTL (298 aa)) is necessary for interaction with AKT1. Over residues 460-475 (LSTPGSGQLPGTNDLA) the composition is skewed to polar residues. Disordered regions lie at residues 460–486 (LSTP…SSVS) and 522–545 (RSSG…PDLQ). The span at 476–486 (STPGSGSSSVS) shows a compositional bias: low complexity. Residues 522–538 (RSSGVQPSPARSSSYSE) are compositionally biased toward polar residues. S535 carries the post-translational modification Phosphoserine; by MAP3K5 and RIPK1. The residue at position 554 (S554) is a Phosphoserine. 5 disordered regions span residues 611 to 630 (VPTP…PQLL), 650 to 672 (PRGL…NSEE), 702 to 805 (SLTE…SPNA), 822 to 841 (EDEG…SKEE), and 971 to 996 (RNGV…SSNC). Residues 659-672 (EGHSSLSSHSNSEE) show a composition bias toward low complexity. Pro residues predominate over residues 726–738 (QPPPPPPPPPPAP). Polar residues-rich tracts occupy residues 746 to 762 (MLST…TLAS) and 774 to 783 (LRQQSSSSKG). Phosphoserine is present on residues S785 and S802. Over residues 830–841 (PPHRDRLRSKEE) the composition is skewed to basic and acidic residues. Residues 832 to 966 (HRDRLRSKEE…SALTQLKERY (135 aa)) are a coiled coil. A compositionally biased stretch (polar residues) spans 974-996 (VSPTNPTKLQITENGEFRNSSNC).

As to quaternary structure, on plasma membrane, exists in an inactive form complexed with TNFR1; in response to TNF-alpha, dissociates from TNFR1 complex, translocates to cytoplasm and forms part of an intracellular signaling complex comprising TRADD, RIPK1, TRAF2 and MAP3K5. Interacts (via NPXY motif) with DAB2 (via PID domain). Interacts (via PH domain) with ERN1. Part of a cytoplasmic complex made of HIPK1, DAB2IP and MAP3K5 in response to TNF-alpha; this complex formation promotes MAP3K5-JNK activation and subsequent apoptosis. Interacts (via N-terminal domain) with JAK2; the interaction occurs in a IFNG/IFN-gamma-dependent manner and inhibits JAK2 autophosphorylation activity. Interacts (via C2 domain) with GSK3B; the interaction stimulates GSK3B kinase activation. Interacts (via C2 domain) with PPP2CA. Interacts (via proline-rich motif) with a regulatory p85 subunit (via SH3 domain) of the PI3K complex; the interaction inhibits the PI3K-AKT complex activity in a TNF-alpha-dependent manner in prostate cancer (PCa) cells. Interacts with AKT1; the interaction is increased in a TNF-alpha-induced manner. Interacts (via C2 domain and active form preferentially) with KDR/VEGFR2 (tyrosine-phosphorylated active form preferentially); the interaction occurs at the late phase of VEGFA response and inhibits KDR/VEGFR2 activity. Interacts (via N-terminus C2 domain) with MAP3K5 ('Ser-966' dephosphorylated form preferentially); the interaction occurs in a TNF-alpha-induced manner. Interacts (via Ras-GAP domain) with the catalytic subunit of protein phosphatase PP2A; the interaction occurs in resting endothelial cells, is further enhanced by TNF-alpha stimulation and is required to bridge PP2A to MAP3K5. Interacts (via C-terminus PER domain) with TRAF2 (via zinc fingers); the interaction occurs in a TNF-alpha-dependent manner. Interacts with 14-3-3 proteins; the interaction occurs in a TNF-alpha-dependent manner. Interacts (via Ras-GAP domain) with RIPK1 (via kinase domain); the interaction occurs in a TNF-alpha-dependent manner. Interacts with DAB1 and DAB2. Interacts with RAB40C; acts as a GAP for RAB40C. In terms of processing, in response to TNF-alpha-induction, phosphorylated at Ser-535; phosphorylation leads to a conformational change, and thus, increases its association with 14-3-3 proteins, MAP3K5, RIPK1 and TRAF2 in endothelial cells; also stimulates regulatory p85 subunit sequestring and PI3K-p85 complex activity inhibition. Expressed in brain, lung, thymus, bladder and skeletal muscle. Up-regulatedd during prostate degeneration.

The protein resides in the cytoplasm. Its subcellular location is the cell membrane. It is found in the membrane. The protein localises to the cell projection. It localises to the dendrite. In terms of biological role, functions as a scaffold protein implicated in the regulation of a large spectrum of both general and specialized signaling pathways. Involved in several processes such as innate immune response, inflammation and cell growth inhibition, apoptosis, cell survival, angiogenesis, cell migration and maturation. Also plays a role in cell cycle checkpoint control; reduces G1 phase cyclin levels resulting in G0/G1 cell cycle arrest. Mediates signal transduction by receptor-mediated inflammatory signals, such as the tumor necrosis factor (TNF), interferon (IFN) or lipopolysaccharide (LPS). Modulates the balance between phosphatidylinositol 3-kinase (PI3K)-AKT-mediated cell survival and apoptosis stimulated kinase (MAP3K5)-JNK signaling pathways; sequesters both AKT1 and MAP3K5 and counterbalances the activity of each kinase by modulating their phosphorylation status in response to pro-inflammatory stimuli. Acts as a regulator of the endoplasmic reticulum (ER) unfolded protein response (UPR) pathway; specifically involved in transduction of the ER stress-response to the JNK cascade through ERN1. Mediates TNF-alpha-induced apoptosis activation by facilitating dissociation of inhibitor 14-3-3 from MAP3K5; recruits the PP2A phosphatase complex which dephosphorylates MAP3K5 on 'Ser-966', leading to the dissociation of 13-3-3 proteins and activation of the MAP3K5-JNK signaling pathway in endothelial cells. Acts a negative regulator in the IFN-gamma-mediated JAK-STAT signaling cascade by inhibiting smooth muscle cell (VSMCs) proliferation and intimal expansion, and thus, prevents graft arteriosclerosis (GA). Acts as a GTPase-activating protein (GAP) for the ADP ribosylation factor 6 (ARF6). Promotes hydrolysis of the ARF6-bound GTP and thus, negatively regulates phosphatidylinositol 4,5-bisphosphate (PIP2)-dependent TLR4-TIRAP-MyD88 and NF-kappa-B signaling pathways in endothelial cells in response to lipopolysaccharides (LPS). Binds specifically to phosphatidylinositol 4-phosphate (PtdIns4P) and phosphatidylinositol 3-phosphate (PtdIns3P). In response to vascular endothelial growth factor (VEGFA), acts as a negative regulator of the VEGFR2-PI3K-mediated angiogenic signaling pathway by inhibiting endothelial cell migration and tube formation. In the developing brain, promotes both the transition from the multipolar to the bipolar stage and the radial migration of cortical neurons from the ventricular zone toward the superficial layer of the neocortex in a glial-dependent locomotion process. Probable downstream effector of the Reelin signaling pathway; promotes Purkinje cell (PC) dendrites development and formation of cerebellar synapses. Also functions as a tumor suppressor protein in prostate cancer progression; prevents cell proliferation and epithelial-to-mesenchymal transition (EMT) through activation of the glycogen synthase kinase-3 beta (GSK3B)-induced beta-catenin and inhibition of PI3K-AKT and Ras-MAPK survival downstream signaling cascades, respectively. Mediates TNF/TRAF2-induced MAP3K5-JNK activation, while it inhibits CHUK-NF-kappa-B signaling. Functions as a Ras GTPase-activating protein. May act as a tumor suppressor gene. The chain is Disabled homolog 2-interacting protein (Dab2ip) from Rattus norvegicus (Rat).